A 253-amino-acid polypeptide reads, in one-letter code: Tryptophan synthase alpha chain (253 aa).

Active-site proton acceptor residues include E47 and D58.

Belongs to the TrpA family. Tetramer of two alpha and two beta chains.

The enzyme catalyses (1S,2R)-1-C-(indol-3-yl)glycerol 3-phosphate + L-serine = D-glyceraldehyde 3-phosphate + L-tryptophan + H2O. It functions in the pathway amino-acid biosynthesis; L-tryptophan biosynthesis; L-tryptophan from chorismate: step 5/5. The alpha subunit is responsible for the aldol cleavage of indoleglycerol phosphate to indole and glyceraldehyde 3-phosphate. The sequence is that of Tryptophan synthase alpha chain from Lactococcus lactis subsp. lactis (strain IL1403) (Streptococcus lactis).